We begin with the raw amino-acid sequence, 630 residues long: Chaperone protein HtpG (630 aa).

Residues 1–336 (MTTTVEQTAE…TADLPLNVSR (336 aa)) are a; substrate-binding. The b stretch occupies residues 337 to 551 (EMIQESPILA…EDGYDRQMEK (215 aa)). Positions 552–630 (ILQNAGRLQG…VFERSVRSEG (79 aa)) are c.

This sequence belongs to the heat shock protein 90 family. In terms of assembly, homodimer.

Its subcellular location is the cytoplasm. Its function is as follows. Molecular chaperone. Has ATPase activity. This is Chaperone protein HtpG from Rhizobium etli (strain ATCC 51251 / DSM 11541 / JCM 21823 / NBRC 15573 / CFN 42).